Consider the following 473-residue polypeptide: ATP synthase subunit beta, chloroplastic (473 aa).

Gly172–Thr179 contacts ATP.

It belongs to the ATPase alpha/beta chains family. In terms of assembly, F-type ATPases have 2 components, CF(1) - the catalytic core - and CF(0) - the membrane proton channel. CF(1) has five subunits: alpha(3), beta(3), gamma(1), delta(1), epsilon(1). CF(0) has four main subunits: a(1), b(1), b'(1) and c(9-12).

It localises to the plastid. The protein resides in the chloroplast thylakoid membrane. The enzyme catalyses ATP + H2O + 4 H(+)(in) = ADP + phosphate + 5 H(+)(out). Functionally, produces ATP from ADP in the presence of a proton gradient across the membrane. The catalytic sites are hosted primarily by the beta subunits. This chain is ATP synthase subunit beta, chloroplastic, found in Pteridium esculentum (Bracken fern).